Reading from the N-terminus, the 323-residue chain is tRNA U34 carboxymethyltransferase (323 aa).

Residues Lys-93, Trp-107, Lys-112, Gly-132, 154–156, 182–183, Met-197, Tyr-201, and Arg-316 each bind carboxy-S-adenosyl-L-methionine; these read DPS and VE.

It belongs to the class I-like SAM-binding methyltransferase superfamily. CmoB family. Homotetramer.

It carries out the reaction carboxy-S-adenosyl-L-methionine + 5-hydroxyuridine(34) in tRNA = 5-carboxymethoxyuridine(34) in tRNA + S-adenosyl-L-homocysteine + H(+). Functionally, catalyzes carboxymethyl transfer from carboxy-S-adenosyl-L-methionine (Cx-SAM) to 5-hydroxyuridine (ho5U) to form 5-carboxymethoxyuridine (cmo5U) at position 34 in tRNAs. The polypeptide is tRNA U34 carboxymethyltransferase (Pseudoalteromonas atlantica (strain T6c / ATCC BAA-1087)).